The chain runs to 297 residues: rRNA 2'-O-methyltransferase fibrillarin (297 aa).

A disordered region spans residues 1–56 (MRGGFGRGGGGRGGSRGGRGGFGRGGGRGGGRGGGRGGGRGGGRGGGRGGGRGGAG). Residues Arg2, Arg7, Arg12, Arg16, Arg19, Arg24, Arg28, Arg32, Arg36, Arg40, Arg44, Arg48, and Arg52 each carry the asymmetric dimethylarginine modification. S-adenosyl-L-methionine-binding positions include 149–150 (TT), 168–169 (EF), 192–193 (DA), and 212–215 (DVAQ).

It belongs to the methyltransferase superfamily. Fibrillarin family. As to quaternary structure, component of box C/D small nucleolar ribonucleoprotein (snoRNP) particles. It is associated with the U3, U8 and U13 small nuclear RNAs. By homology to other fibrillarins, some or all of the N-terminal domain arginines are modified to asymmetric dimethylarginine (DMA).

The protein localises to the nucleus. The protein resides in the nucleolus. The enzyme catalyses L-glutaminyl-[histone H2A] + S-adenosyl-L-methionine = N(5)-methyl-L-glutaminyl-[histone H2A] + S-adenosyl-L-homocysteine + H(+). Functionally, S-adenosyl-L-methionine-dependent methyltransferase that has the ability to methylate both RNAs and proteins. Involved in pre-rRNA processing. Utilizes the methyl donor S-adenosyl-L-methionine to catalyze the site-specific 2'-hydroxyl methylation of ribose moieties in pre-ribosomal RNA. Site specificity is provided by a guide RNA that base pairs with the substrate. Methylation occurs at a characteristic distance from the sequence involved in base pairing with the guide RNA. Also acts as a protein methyltransferase by mediating methylation of 'Gln-105' of histone H2A (H2AQ105me), a modification that impairs binding of the FACT complex and is specifically present at 35S ribosomal DNA locus. The protein is rRNA 2'-O-methyltransferase fibrillarin of Leishmania major.